The chain runs to 49 residues: Large ribosomal subunit protein bL33B (49 aa).

This sequence belongs to the bacterial ribosomal protein bL33 family.

The protein is Large ribosomal subunit protein bL33B of Lactobacillus helveticus (strain DPC 4571).